Here is a 439-residue protein sequence, read N- to C-terminus: 23S rRNA (uracil(1939)-C(5))-methyltransferase RlmD (439 aa).

A TRAM domain is found at 5-63 (RKLEHKTYKLNIESFSHEGRGIAHFEDKIIFVSDALPGELVIANRTFSCAKFEEADAKE). Residues C76, C82, C85, and C164 each contribute to the [4Fe-4S] cluster site. The S-adenosyl-L-methionine site is built by Q271, F300, N305, E321, D348, and D370. C396 serves as the catalytic Nucleophile.

Belongs to the class I-like SAM-binding methyltransferase superfamily. RNA M5U methyltransferase family. RlmD subfamily.

The catalysed reaction is uridine(1939) in 23S rRNA + S-adenosyl-L-methionine = 5-methyluridine(1939) in 23S rRNA + S-adenosyl-L-homocysteine + H(+). In terms of biological role, catalyzes the formation of 5-methyl-uridine at position 1939 (m5U1939) in 23S rRNA. The polypeptide is 23S rRNA (uracil(1939)-C(5))-methyltransferase RlmD (Vesicomyosocius okutanii subsp. Calyptogena okutanii (strain HA)).